The following is a 209-amino-acid chain: Dual specificity protein phosphatase 22 (209 aa).

Residues 4 to 144 enclose the Tyrosine-protein phosphatase domain; the sequence is GMNKILPSLF…LEDFGKHDVY (141 aa). Catalysis depends on cysteine 88, which acts as the Phosphocysteine intermediate. The interval 170–193 is disordered; the sequence is DKHKQQEAAESQSATSSGRQWSSH. Over residues 177–193 the composition is skewed to low complexity; it reads AAESQSATSSGRQWSSH.

This sequence belongs to the protein-tyrosine phosphatase family. Non-receptor class dual specificity subfamily.

It localises to the cytoplasm. It is found in the nucleus. The enzyme catalyses O-phospho-L-tyrosyl-[protein] + H2O = L-tyrosyl-[protein] + phosphate. It carries out the reaction O-phospho-L-seryl-[protein] + H2O = L-seryl-[protein] + phosphate. The catalysed reaction is O-phospho-L-threonyl-[protein] + H2O = L-threonyl-[protein] + phosphate. In terms of biological role, activates the Jnk signaling pathway. Dephosphorylates and deactivates p38 and stress-activated protein kinase/c-Jun N-terminal kinase (SAPK/JNK). In Xenopus tropicalis (Western clawed frog), this protein is Dual specificity protein phosphatase 22 (dusp22).